Here is a 546-residue protein sequence, read N- to C-terminus: Chaperonin GroEL (546 aa).

ATP contacts are provided by residues 29 to 32 (TLGP), K50, 86 to 90 (DGTTT), G414, 477 to 479 (NAL), and D493.

The protein belongs to the chaperonin (HSP60) family. As to quaternary structure, forms a cylinder of 14 subunits composed of two heptameric rings stacked back-to-back. Interacts with the co-chaperonin GroES.

It localises to the cytoplasm. The enzyme catalyses ATP + H2O + a folded polypeptide = ADP + phosphate + an unfolded polypeptide.. Together with its co-chaperonin GroES, plays an essential role in assisting protein folding. The GroEL-GroES system forms a nano-cage that allows encapsulation of the non-native substrate proteins and provides a physical environment optimized to promote and accelerate protein folding. The sequence is that of Chaperonin GroEL from Leptospira interrogans serogroup Icterohaemorrhagiae serovar copenhageni (strain Fiocruz L1-130).